The sequence spans 152 residues: Ninjurin-1 (152 aa).

Methionine 1 is subject to N-acetylmethionine. The span at 1–10 (MDPGTEEYEL) shows a compositional bias: acidic residues. The segment at 1 to 30 (MDPGTEEYELNGDLRPGSPGSPDASPPRWG) is disordered. Topologically, residues 1-78 (MDPGTEEYEL…EQGNEFAFFV (78 aa)) are extracellular. The segment covering 16-27 (PGSPGSPDASPP) has biased composition (low complexity). A phosphoserine mark is found at serine 18, serine 21, and serine 25. Positions 26–37 (PPRWGLRNRPIN) are N-terminal adhesion motif. Residues 40 to 69 (HYANKKSAAESMLDIALLMANASQLKAVVE) are required to induce plasma membrane rupture. The interval 44-55 (KKSAAESMLDIA) is helix alpha1. The segment at 58–74 (MANASQLKAVVEQGNEF) is helix alpha2. Asparagine 60 is a glycosylation site (N-linked (GlcNAc...) asparagine). The helical transmembrane segment at 79–103 (PLVVLISISLVLQIGVGVLLIFLVK) threads the bilayer. At 104-113 (YDLNNPAKHA) the chain is on the cytoplasmic side. The helical transmembrane segment at 114-138 (KLDFLNNLATGLVFIIVVVNIFITA) threads the bilayer. Topologically, residues 139 to 152 (FGVQKPVMDVAPRQ) are extracellular.

Belongs to the ninjurin family. Homodimer; in absence of death stimuli, forms an inactive homodimer. Homooligomer; in response to death stimuli, homooligomerizes into long, highly branched filaments and large, ring-shaped structures in the membrane. The topology shown in the entry corresponds to the activated form. In terms of processing, cleaved by MMP9 protease to generate the Secreted ninjurin-1 form. Post-translationally, N-linked glycosylation is required for homooligomerization.

It localises to the cell membrane. The protein localises to the synaptic cell membrane. The protein resides in the secreted. With respect to regulation, in response to death stimuli, homooligomerizes and disrupts membrane integrity by introducing the hydrophilic faces of alpha1 and alpha2 helices into the hydrophobic membrane. Homooligomerization and ability to mediate plasma membrane rupture is inhibited by glycine; it is unclear whether glycine directly or indirectly inhibits homooligomerization. In normal conditions, NINJ1 is autoinhibited via formation of a homodimer: in the inactive homodimer, the alpha1 and alpha2 helices (residues 44-74) form a single transmembrane region without a kink, in which hydrophilic faces of alpha1 and alpha2 helices are sequestered. In terms of biological role, effector of various programmed cell death, such as pyroptosis and necroptosis, which mediates plasma membrane rupture (cytolysis). Oligomerizes in response to death stimuli and forms ring-like structures on the plasma membrane: acts by cutting and shedding membrane disks, like a cookie cutter, leading to membrane damage and loss that cannot be repaired by the cell. Plasma membrane rupture leads to release intracellular molecules named damage-associated molecular patterns (DAMPs) that propagate the inflammatory response. Mechanistically, mediates plasma membrane rupture by introducing hydrophilic faces of 2 alpha helices into the hydrophobic membrane. Induces plasma membrane rupture downstream of Gasdermin (GSDMA, GSDMB, GSDMC, GSDMD, or GSDME) or MLKL during pyroptosis or necroptosis, respectively. Acts as an effector of PANoptosis downstream of CASP1, CASP4, CASP8 and RIPK3. Also induces plasma membrane rupture in response to cell swelling caused by osmotic stress and ferroptosis downstream of lipid peroxidation. Acts as a regulator of Toll-like receptor 4 (TLR4) signaling triggered by lipopolysaccharide (LPS) during systemic inflammation; directly binds LPS. Involved in leukocyte migration during inflammation by promoting transendothelial migration of macrophages via homotypic binding. Promotes the migration of monocytes across the brain endothelium to central nervous system inflammatory lesions. Also acts as a homophilic transmembrane adhesion molecule involved in various processes such as axonal growth, cell chemotaxis and angiogenesis. Promotes cell adhesion by mediating homophilic interactions via its extracellular N-terminal adhesion motif (N-NAM). Involved in the progression of the inflammatory stress by promoting cell-to-cell interactions between immune cells and endothelial cells. Plays a role in nerve regeneration by promoting maturation of Schwann cells. Acts as a regulator of angiogenesis. Promotes the formation of new vessels by mediating the interaction between capillary pericyte cells and endothelial cells. Promotes osteoclasts development by enhancing the survival of prefusion osteoclasts. Also involved in striated muscle growth and differentiation. Functionally, secreted form generated by cleavage, which has chemotactic activity. Acts as an anti-inflammatory mediator by promoting monocyte recruitment, thereby ameliorating atherosclerosis. In Rattus norvegicus (Rat), this protein is Ninjurin-1.